The sequence spans 615 residues: Putative binding protein BruAb2_0648 (615 aa).

The signal sequence occupies residues 1 to 29 (MLNRFIAFFRSVFLIGLVATAFGALPARA).

This sequence belongs to the bacterial solute-binding protein 5 family.

It is found in the periplasm. The polypeptide is Putative binding protein BruAb2_0648 (Brucella abortus biovar 1 (strain 9-941)).